Here is a 101-residue protein sequence, read N- to C-terminus: MAKKSSVEKQKRRERLVQLKWDKRKELREKSYNINLSEEEREQARIALNKMPRDSSPIRLRNRCQMTGRARGFMRKFKLSRLTFRELASMGMIPGVTKSSW.

This sequence belongs to the universal ribosomal protein uS14 family. Part of the 30S ribosomal subunit. Contacts proteins S3 and S10.

In terms of biological role, binds 16S rRNA, required for the assembly of 30S particles and may also be responsible for determining the conformation of the 16S rRNA at the A site. This is Small ribosomal subunit protein uS14 from Protochlamydia amoebophila (strain UWE25).